Reading from the N-terminus, the 75-residue chain is Sec-independent protein translocase protein TatA (75 aa).

A helical membrane pass occupies residues 1-21; the sequence is MGSMSIWHWIVVLAVVLLLFG. The tract at residues 43 to 75 is disordered; that stretch reads MAEDDDAPAKPAEPPRAVPHQATPAPESEKKAV.

Belongs to the TatA/E family. In terms of assembly, the Tat system comprises two distinct complexes: a TatABC complex, containing multiple copies of TatA, TatB and TatC subunits, and a separate TatA complex, containing only TatA subunits. Substrates initially bind to the TatABC complex, which probably triggers association of the separate TatA complex to form the active translocon.

It is found in the cell inner membrane. Its function is as follows. Part of the twin-arginine translocation (Tat) system that transports large folded proteins containing a characteristic twin-arginine motif in their signal peptide across membranes. TatA could form the protein-conducting channel of the Tat system. The sequence is that of Sec-independent protein translocase protein TatA from Azorhizobium caulinodans (strain ATCC 43989 / DSM 5975 / JCM 20966 / LMG 6465 / NBRC 14845 / NCIMB 13405 / ORS 571).